Consider the following 162-residue polypeptide: Ribosome maturation factor RimP (162 aa).

This sequence belongs to the RimP family.

It is found in the cytoplasm. In terms of biological role, required for maturation of 30S ribosomal subunits. The protein is Ribosome maturation factor RimP of Ralstonia pickettii (strain 12J).